A 121-amino-acid chain; its full sequence is Basic phospholipase A2 F17 (121 aa).

Intrachain disulfides connect Cys25/Cys114, Cys27/Cys43, Cys42/Cys94, Cys48/Cys121, Cys49/Cys87, Cys56/Cys80, and Cys74/Cys85. Residues Tyr26, Gly28, and Gly30 each coordinate Ca(2+). The active site involves His46. Asp47 is a Ca(2+) binding site. The active site involves Asp88.

It belongs to the phospholipase A2 family. Group II subfamily. D49 sub-subfamily. When this protein is associated with crotapotin (F5 or F7), it forms the crotoxin protein. Requires Ca(2+) as cofactor. In terms of tissue distribution, expressed by the venom gland.

The protein localises to the secreted. The catalysed reaction is a 1,2-diacyl-sn-glycero-3-phosphocholine + H2O = a 1-acyl-sn-glycero-3-phosphocholine + a fatty acid + H(+). Its activity is regulated as follows. Activated by heparin. Inhibited by its chaperone crotapotin. In terms of biological role, snake venom phospholipase A2 (PLA2) that has anticoagulant activity and inhibits bactericial growth of the Gram-negative bacteria Xanthomonas axonopodis pv. passiflorae (in monomeric form). PLA2 catalyzes the calcium-dependent hydrolysis of the 2-acyl groups in 3-sn-phosphoglycerides. The protein is Basic phospholipase A2 F17 of Crotalus durissus terrificus (South American rattlesnake).